A 277-amino-acid chain; its full sequence is Xyloglucan endotransglucosylase/hydrolase protein 19 (277 aa).

A signal peptide spans 1–21 (MKSFTFLILFLFAAQSISVYA). Residues 22–213 (GSFHKDVKIH…WSKAPFTAYY (192 aa)) enclose the GH16 domain. The Nucleophile role is filled by Glu-99. Glu-103 (proton donor) is an active-site residue. Glu-103 serves as a coordination point for xyloglucan. N-linked (GlcNAc...) asparagine glycosylation is present at Asn-107. Xyloglucan contacts are provided by residues 116-118 (HTN), 126-128 (DKE), 192-193 (HW), and Gly-197. 2 cysteine pairs are disulfide-bonded: Cys-221–Cys-230 and Cys-262–Cys-276. Residue Arg-267 coordinates xyloglucan.

The protein belongs to the glycosyl hydrolase 16 family. XTH group 2 subfamily. Post-translationally, contains at least one intrachain disulfide bond essential for its enzymatic activity. As to expression, root specific.

It is found in the secreted. Its subcellular location is the cell wall. It localises to the extracellular space. The protein localises to the apoplast. The catalysed reaction is breaks a beta-(1-&gt;4) bond in the backbone of a xyloglucan and transfers the xyloglucanyl segment on to O-4 of the non-reducing terminal glucose residue of an acceptor, which can be a xyloglucan or an oligosaccharide of xyloglucan.. Its function is as follows. Possesses xyloglucan endotransglucosylase (XET) activity in vitro. Does not possess xyloglucan endohydrolysis (XEH) activity. Cleaves and religates xyloglucan polymers, an essential constituent of the primary cell wall, and thereby participates in cell wall construction of growing tissues. Involved in cell proliferation in the tissue reunion process of wounded inflorescence stems. Maybe a downstream target of NAC071 as a consequence of auxin action in wounded stems. In Arabidopsis thaliana (Mouse-ear cress), this protein is Xyloglucan endotransglucosylase/hydrolase protein 19.